Consider the following 305-residue polypeptide: Ribonuclease BN (305 aa).

The Zn(2+) site is built by histidine 64, histidine 66, aspartate 68, histidine 69, histidine 141, aspartate 212, and histidine 270. The active-site Proton acceptor is aspartate 68.

The protein belongs to the RNase Z family. RNase BN subfamily. As to quaternary structure, homodimer. Requires Zn(2+) as cofactor.

Functionally, zinc phosphodiesterase, which has both exoribonuclease and endoribonuclease activities. The polypeptide is Ribonuclease BN (Escherichia coli O127:H6 (strain E2348/69 / EPEC)).